A 179-amino-acid polypeptide reads, in one-letter code: Ribosome maturation factor RimM (179 aa).

Positions Lys95–Leu174 constitute a PRC barrel domain.

Belongs to the RimM family. As to quaternary structure, binds ribosomal protein uS19.

Its subcellular location is the cytoplasm. Functionally, an accessory protein needed during the final step in the assembly of 30S ribosomal subunit, possibly for assembly of the head region. Essential for efficient processing of 16S rRNA. May be needed both before and after RbfA during the maturation of 16S rRNA. It has affinity for free ribosomal 30S subunits but not for 70S ribosomes. The sequence is that of Ribosome maturation factor RimM from Campylobacter jejuni subsp. doylei (strain ATCC BAA-1458 / RM4099 / 269.97).